We begin with the raw amino-acid sequence, 63 residues long: Large ribosomal subunit protein uL29 (63 aa).

This sequence belongs to the universal ribosomal protein uL29 family.

The protein is Large ribosomal subunit protein uL29 of Glaesserella parasuis serovar 5 (strain SH0165) (Haemophilus parasuis).